We begin with the raw amino-acid sequence, 345 residues long: Tetraacyldisaccharide 4'-kinase (345 aa).

54–61 provides a ligand contact to ATP; sequence TLGGAGKT.

Belongs to the LpxK family.

It carries out the reaction a lipid A disaccharide + ATP = a lipid IVA + ADP + H(+). The protein operates within glycolipid biosynthesis; lipid IV(A) biosynthesis; lipid IV(A) from (3R)-3-hydroxytetradecanoyl-[acyl-carrier-protein] and UDP-N-acetyl-alpha-D-glucosamine: step 6/6. In terms of biological role, transfers the gamma-phosphate of ATP to the 4'-position of a tetraacyldisaccharide 1-phosphate intermediate (termed DS-1-P) to form tetraacyldisaccharide 1,4'-bis-phosphate (lipid IVA). This is Tetraacyldisaccharide 4'-kinase from Allorhizobium ampelinum (strain ATCC BAA-846 / DSM 112012 / S4) (Agrobacterium vitis (strain S4)).